We begin with the raw amino-acid sequence, 205 residues long: GTP cyclohydrolase-2 (205 aa).

49 to 53 (RIHSE) is a binding site for GTP. Zn(2+)-binding residues include C54, C65, and C67. GTP-binding positions include Q70, 92 to 94 (EGR), and T114. D126 serves as the catalytic Proton acceptor. Residue R128 is the Nucleophile of the active site. The GTP site is built by T149 and K154.

It belongs to the GTP cyclohydrolase II family. The cofactor is Zn(2+).

It carries out the reaction GTP + 4 H2O = 2,5-diamino-6-hydroxy-4-(5-phosphoribosylamino)-pyrimidine + formate + 2 phosphate + 3 H(+). Its pathway is cofactor biosynthesis; riboflavin biosynthesis; 5-amino-6-(D-ribitylamino)uracil from GTP: step 1/4. Catalyzes the conversion of GTP to 2,5-diamino-6-ribosylamino-4(3H)-pyrimidinone 5'-phosphate (DARP), formate and pyrophosphate. The chain is GTP cyclohydrolase-2 from Shewanella piezotolerans (strain WP3 / JCM 13877).